The chain runs to 98 residues: NADH-ubiquinone oxidoreductase chain 4L (98 aa).

A run of 3 helical transmembrane segments spans residues 1–21 (MSLV…GLLM), 25–45 (HLMS…VMAT), and 59–81 (MPII…LVMV).

It belongs to the complex I subunit 4L family. As to quaternary structure, core subunit of respiratory chain NADH dehydrogenase (Complex I) which is composed of 45 different subunits.

The protein resides in the mitochondrion inner membrane. The enzyme catalyses a ubiquinone + NADH + 5 H(+)(in) = a ubiquinol + NAD(+) + 4 H(+)(out). In terms of biological role, core subunit of the mitochondrial membrane respiratory chain NADH dehydrogenase (Complex I) which catalyzes electron transfer from NADH through the respiratory chain, using ubiquinone as an electron acceptor. Part of the enzyme membrane arm which is embedded in the lipid bilayer and involved in proton translocation. The chain is NADH-ubiquinone oxidoreductase chain 4L (MT-ND4L) from Equus caballus (Horse).